The chain runs to 450 residues: Chromosomal replication initiator protein DnaA (450 aa).

Residues 1–79 form a domain I, interacts with DnaA modulators region; that stretch reads MKDSYFDLNT…MEYAYDVAHD (79 aa). Positions 79 to 112 are domain II; sequence DFFKPELKVIKVVANPVNNQKSNQSNSDFVATDY. Residues 113–329 form a domain III, AAA+ region region; it reads QLNQNFTFDT…GAFNTLTLMA (217 aa). Gly157, Gly159, Lys160, and Thr161 together coordinate ATP. Positions 330-450 are domain IV, binds dsDNA; the sequence is RAGRPINVSN…NLSTKIKEKS (121 aa).

It belongs to the DnaA family. In terms of assembly, oligomerizes as a right-handed, spiral filament on DNA at oriC.

The protein resides in the cytoplasm. Functionally, plays an essential role in the initiation and regulation of chromosomal replication. ATP-DnaA binds to the origin of replication (oriC) to initiate formation of the DNA replication initiation complex once per cell cycle. Binds the DnaA box (a 9 base pair repeat at the origin) and separates the double-stranded (ds)DNA. Forms a right-handed helical filament on oriC DNA; dsDNA binds to the exterior of the filament while single-stranded (ss)DNA is stabiized in the filament's interior. The ATP-DnaA-oriC complex binds and stabilizes one strand of the AT-rich DNA unwinding element (DUE), permitting loading of DNA polymerase. After initiation quickly degrades to an ADP-DnaA complex that is not apt for DNA replication. Binds acidic phospholipids. The sequence is that of Chromosomal replication initiator protein DnaA from Oenococcus oeni (strain ATCC BAA-331 / PSU-1).